Here is a 124-residue protein sequence, read N- to C-terminus: Large ribosomal subunit protein bL12 (124 aa).

It belongs to the bacterial ribosomal protein bL12 family. In terms of assembly, homodimer. Part of the ribosomal stalk of the 50S ribosomal subunit. Forms a multimeric L10(L12)X complex, where L10 forms an elongated spine to which 2 to 4 L12 dimers bind in a sequential fashion. Binds GTP-bound translation factors.

Functionally, forms part of the ribosomal stalk which helps the ribosome interact with GTP-bound translation factors. Is thus essential for accurate translation. The polypeptide is Large ribosomal subunit protein bL12 (Idiomarina loihiensis (strain ATCC BAA-735 / DSM 15497 / L2-TR)).